The following is a 706-amino-acid chain: Translation factor GUF1 homolog, mitochondrial (706 aa).

The region spanning 89 to 272 (SRIRNFSIIA…SIVKNVPPPQ (184 aa)) is the tr-type G domain. Residues 98–105 (AHIDHGKS), 165–169 (DTPGH), and 219–222 (NKID) contribute to the GTP site.

Belongs to the TRAFAC class translation factor GTPase superfamily. Classic translation factor GTPase family. LepA subfamily.

It is found in the mitochondrion inner membrane. It catalyses the reaction GTP + H2O = GDP + phosphate + H(+). Its function is as follows. Promotes mitochondrial protein synthesis. May act as a fidelity factor of the translation reaction, by catalyzing a one-codon backward translocation of tRNAs on improperly translocated ribosomes. Binds to mitochondrial ribosomes in a GTP-dependent manner. This chain is Translation factor GUF1 homolog, mitochondrial, found in Thalassiosira pseudonana (Marine diatom).